Here is a 180-residue protein sequence, read N- to C-terminus: NAD(P)H-quinone oxidoreductase subunit I, chloroplastic (180 aa).

4Fe-4S ferredoxin-type domains are found at residues 55-84 (GRIH…VDWR) and 95-124 (LNYS…MTEE). [4Fe-4S] cluster contacts are provided by cysteine 64, cysteine 67, cysteine 70, cysteine 74, cysteine 104, cysteine 107, cysteine 110, and cysteine 114.

It belongs to the complex I 23 kDa subunit family. NDH is composed of at least 16 different subunits, 5 of which are encoded in the nucleus. [4Fe-4S] cluster serves as cofactor.

The protein localises to the plastid. The protein resides in the chloroplast thylakoid membrane. The enzyme catalyses a plastoquinone + NADH + (n+1) H(+)(in) = a plastoquinol + NAD(+) + n H(+)(out). It catalyses the reaction a plastoquinone + NADPH + (n+1) H(+)(in) = a plastoquinol + NADP(+) + n H(+)(out). Functionally, NDH shuttles electrons from NAD(P)H:plastoquinone, via FMN and iron-sulfur (Fe-S) centers, to quinones in the photosynthetic chain and possibly in a chloroplast respiratory chain. The immediate electron acceptor for the enzyme in this species is believed to be plastoquinone. Couples the redox reaction to proton translocation, and thus conserves the redox energy in a proton gradient. The protein is NAD(P)H-quinone oxidoreductase subunit I, chloroplastic of Amborella trichopoda.